A 282-amino-acid polypeptide reads, in one-letter code: Probable methylxanthine N7-demethylase NdmC (282 aa).

It catalyses the reaction 7-methylxanthine + NADPH + O2 + H(+) = xanthine + formaldehyde + NADP(+) + H2O. It carries out the reaction 7-methylxanthine + NADH + O2 + H(+) = xanthine + formaldehyde + NAD(+) + H2O. Functionally, involved in the caffeine degradation, which is the essential first step for assimilating the carbon and nitrogen in caffeine. Probably catalyzes the N7-demethylation of 7-methylxanthine to produce xanthine and formaldehyde. The polypeptide is Probable methylxanthine N7-demethylase NdmC (Pseudomonas sp. (strain TJI-51)).